Reading from the N-terminus, the 290-residue chain is Outer dense fiber protein 4 (290 aa).

A Phosphoserine modification is found at Ser28. The next 4 membrane-spanning stretches (helical) occupy residues 44–64 (AQVV…LMVF), 132–152 (ISFI…HLPY), 164–184 (LIGI…LLLF), and 201–221 (IGWS…CGIL). The segment at 262–290 (ADILDPTQDDQKPLSSDNIALPPNPDTTD) is disordered.

Its subcellular location is the membrane. Functionally, component of the outer dense fibers (ODF) of spermatozoa which could be involved in sperm tail structure, sperm movement and general organization of cellular cytoskeleton. This chain is Outer dense fiber protein 4 (Odf4), found in Rattus norvegicus (Rat).